Reading from the N-terminus, the 368-residue chain is Biotin synthase (368 aa).

In terms of domain architecture, Radical SAM core spans valine 46–arginine 277. 3 residues coordinate [4Fe-4S] cluster: cysteine 64, cysteine 68, and cysteine 71. Residues serine 109, cysteine 142, and cysteine 202 each coordinate [2Fe-2S] cluster. Residues arginine 347 to alanine 368 form a disordered region.

This sequence belongs to the radical SAM superfamily. Biotin synthase family. Homodimer. The cofactor is [4Fe-4S] cluster. It depends on [2Fe-2S] cluster as a cofactor.

It catalyses the reaction (4R,5S)-dethiobiotin + (sulfur carrier)-SH + 2 reduced [2Fe-2S]-[ferredoxin] + 2 S-adenosyl-L-methionine = (sulfur carrier)-H + biotin + 2 5'-deoxyadenosine + 2 L-methionine + 2 oxidized [2Fe-2S]-[ferredoxin]. It functions in the pathway cofactor biosynthesis; biotin biosynthesis; biotin from 7,8-diaminononanoate: step 2/2. In terms of biological role, catalyzes the conversion of dethiobiotin (DTB) to biotin by the insertion of a sulfur atom into dethiobiotin via a radical-based mechanism. The sequence is that of Biotin synthase from Anaeromyxobacter sp. (strain Fw109-5).